Here is a 485-residue protein sequence, read N- to C-terminus: Serine/threonine-protein kinase 4 (485 aa).

A Protein kinase domain is found at 30–281 (FDVLEKLGEG…ATELLQHPFI (252 aa)). ATP contacts are provided by residues 36-44 (LGEGSYGSV) and Lys59. The active-site Proton acceptor is Asp149. Phosphothreonine; by autocatalysis is present on Thr183. In terms of domain architecture, SARAH spans 431 to 478 (YSFLKDWSVAEVQLKLNSLDPMMEREIEEIHHKYQAKRQPILEAIESK).

Belongs to the protein kinase superfamily. STE Ser/Thr protein kinase family. STE20 subfamily. Homodimer; mediated via the coiled-coil region. It depends on Mg(2+) as a cofactor. In terms of processing, autophosphorylated on Thr-183. Post-translationally, proteolytically cleaved by caspase-3 during apoptosis at Asp-326 resulting in a 37 kDa form. Proteolytic cleavage results in kinase activation and nuclear translocation of the truncated form (MST1/N).

The protein localises to the cytoplasm. Its subcellular location is the nucleus. The catalysed reaction is L-seryl-[protein] + ATP = O-phospho-L-seryl-[protein] + ADP + H(+). It carries out the reaction L-threonyl-[protein] + ATP = O-phospho-L-threonyl-[protein] + ADP + H(+). With respect to regulation, the C-terminal non-catalytic region inhibits the kinase activity, the enzyme is activated by caspase-cleavage. Homodimerization and autophosphorylation of Thr-183 is also required for full activation. Functionally, stress-activated, pro-apoptotic kinase which, following caspase-cleavage, enters the nucleus and induces chromatin condensation followed by internucleosomal DNA fragmentation. Key component of the Hippo signaling pathway which plays a pivotal role in organ size control and tumor suppression by restricting proliferation and promoting apoptosis. The core of this pathway is composed of a kinase cascade wherein stk3/mst2 and stk4/mst1, in complex with its regulatory protein sav1, phosphorylates and activates lats1/2 in complex with its regulatory protein mob1, which in turn phosphorylates and inactivates yap1 oncoprotein and wwtr1/taz. Phosphorylation of yap1 by lats2 inhibits its translocation into the nucleus to regulate cellular genes important for cell proliferation, cell death, and cell migration. Phosphorylates 'Ser-14' of histone H2B (H2BS14ph) during apoptosis. The chain is Serine/threonine-protein kinase 4 (stk4) from Xenopus laevis (African clawed frog).